Here is a 369-residue protein sequence, read N- to C-terminus: Histidinol-phosphate aminotransferase 2 (369 aa).

Lys-231 is subject to N6-(pyridoxal phosphate)lysine.

The protein belongs to the class-II pyridoxal-phosphate-dependent aminotransferase family. Histidinol-phosphate aminotransferase subfamily. Homodimer. Pyridoxal 5'-phosphate serves as cofactor.

The catalysed reaction is L-histidinol phosphate + 2-oxoglutarate = 3-(imidazol-4-yl)-2-oxopropyl phosphate + L-glutamate. The protein operates within amino-acid biosynthesis; L-histidine biosynthesis; L-histidine from 5-phospho-alpha-D-ribose 1-diphosphate: step 7/9. The protein is Histidinol-phosphate aminotransferase 2 of Legionella pneumophila (strain Paris).